Reading from the N-terminus, the 365-residue chain is Carbamoyl phosphate synthase small chain (365 aa).

CPSase regions lie at residues 1–166 (MKRQ…PSPG) and 1–169 (MKRQ…GRGH). L-glutamine is bound by residues S45, G218, and G220. In terms of domain architecture, Glutamine amidotransferase type-1 spans 170–357 (RVVLVDFGMK…LTMIENFKKE (188 aa)). The Nucleophile role is filled by C245. Residues L246, Q249, N287, G289, and Y290 each contribute to the L-glutamine site. Active-site residues include H330 and E332.

Belongs to the CarA family. Composed of two chains; the small (or glutamine) chain promotes the hydrolysis of glutamine to ammonia, which is used by the large (or ammonia) chain to synthesize carbamoyl phosphate. Tetramer of heterodimers (alpha,beta)4.

It catalyses the reaction hydrogencarbonate + L-glutamine + 2 ATP + H2O = carbamoyl phosphate + L-glutamate + 2 ADP + phosphate + 2 H(+). The catalysed reaction is L-glutamine + H2O = L-glutamate + NH4(+). It participates in amino-acid biosynthesis; L-arginine biosynthesis; carbamoyl phosphate from bicarbonate: step 1/1. Its pathway is pyrimidine metabolism; UMP biosynthesis via de novo pathway; (S)-dihydroorotate from bicarbonate: step 1/3. In terms of biological role, small subunit of the glutamine-dependent carbamoyl phosphate synthetase (CPSase). CPSase catalyzes the formation of carbamoyl phosphate from the ammonia moiety of glutamine, carbonate, and phosphate donated by ATP, constituting the first step of 2 biosynthetic pathways, one leading to arginine and/or urea and the other to pyrimidine nucleotides. The small subunit (glutamine amidotransferase) binds and cleaves glutamine to supply the large subunit with the substrate ammonia. This Bacillus anthracis protein is Carbamoyl phosphate synthase small chain.